The primary structure comprises 39 residues: Conotoxin ArMSGL-013 (39 aa).

A propeptide spanning residues 1–5 (RRSLT) is cleaved from the precursor. Disulfide bonds link Cys12/Cys24, Cys16/Cys33, and Cys23/Cys37. Trp38 is subject to Tryptophan amide.

The protein belongs to the conotoxin O3 superfamily. As to expression, expressed by the venom duct.

The protein localises to the secreted. The sequence is that of Conotoxin ArMSGL-013 from Conus arenatus (Sand-dusted cone).